We begin with the raw amino-acid sequence, 185 residues long: Lysozyme g (185 aa).

2 disulfide bridges follow: Cys4–Cys60 and Cys18–Cys29. The active site involves Glu73.

Belongs to the glycosyl hydrolase 23 family.

The protein resides in the secreted. The catalysed reaction is Hydrolysis of (1-&gt;4)-beta-linkages between N-acetylmuramic acid and N-acetyl-D-glucosamine residues in a peptidoglycan and between N-acetyl-D-glucosamine residues in chitodextrins.. The protein is Lysozyme g of Cygnus atratus (Black swan).